A 465-amino-acid chain; its full sequence is FAD-dependent monooxygenase olcE (465 aa).

Residues 9-29 (IIIGGSVAGLTLALSLNKIGI) form a helical membrane-spanning segment. Positions 35, 49, 108, 308, and 321 each coordinate FAD.

It belongs to the paxM FAD-dependent monooxygenase family. It depends on FAD as a cofactor.

Its subcellular location is the membrane. It functions in the pathway secondary metabolite biosynthesis; terpenoid biosynthesis. FAD-dependent monooxygenase; part of the gene cluster that mediates the biosynthesis of 15-deoxyoxalicine B. The first step of the pathway is the synthesis of nicotinyl-CoA from nicotinic acid by the nicotinic acid-CoA ligase olcI. Nicotinyl-CoA is then a substrate of polyketide synthase olcA to produce 4-hydroxy-6-(3-pyridinyl)-2H-pyran-2-one (HPPO) which is further prenylated by the polyprenyl transferase olcH to yield geranylgeranyl-HPPO. Geranylgeranyl pyrophosphate is provided by the cluster-specific geranylgeranyl pyrophosphate synthase olcC. The FAD-dependent monooxygenase olcE catalyzes the epoxidation of geranylgeranyl-HPPO and the terpene cyclase olcD catalyzes the cyclization of the terpenoid component, resulting in the formation of the tricyclic terpene moiety seen in predecaturin E. The cytochrome P450 monooxygenase then catalyzes the allylic oxidation of predecaturin E, which is followed by spirocylization with concomitant loss of one molecule of water to form decaturin E. Decaturin E is the substrate of the cytochrome P450 monooxygenase olcJ which hydroxylates it at the C-29 position to form decaturin F. The short-chain dehydrogenase/reductase olcF may catalyze the oxidation of decaturin F to generate the 29-hydroxyl-27-one intermediate, and subsequent hemiacetal formation probably leads to the formation of decaturin C. The dioxygenase olcK may be a peroxisomal enzyme that catalyzes the hydroxylation of decaturin C into decaturin A once decaturin C is shuttled into the peroxisome by the MFS transporter olcL. Finally the cytochrome P450 monooxygenase olcB catalyzes the oxidative rearrangement to yield 15-deoxyoxalicine B. In the absence of olcJ, decaturin E may be shunted to a pathway in which it is oxidized to a ketone, possibly by olcF, to form decaturin D, which undergoes further allylic oxidation to yield decaturin G. Moreover, in the absence of oclK or oclL, oclB can convert decaturin C into 15-deoxyoxalicine A. This Penicillium canescens protein is FAD-dependent monooxygenase olcE.